The sequence spans 122 residues: Large ribosomal subunit protein uL14 (122 aa).

It belongs to the universal ribosomal protein uL14 family. In terms of assembly, part of the 50S ribosomal subunit. Forms a cluster with proteins L3 and L19. In the 70S ribosome, L14 and L19 interact and together make contacts with the 16S rRNA in bridges B5 and B8.

Binds to 23S rRNA. Forms part of two intersubunit bridges in the 70S ribosome. The chain is Large ribosomal subunit protein uL14 from Buchnera aphidicola subsp. Acyrthosiphon pisum (strain 5A).